The chain runs to 740 residues: UvrABC system protein B (740 aa).

The segment at M1–R36 is disordered. A compositionally biased stretch (basic and acidic residues) spans T8–K33. Residues K56–R444 enclose the Helicase ATP-binding domain. An ATP-binding site is contributed by G69 to T76. Positions Y122–I145 match the Beta-hairpin motif. Residues Q461–V627 form the Helicase C-terminal domain. One can recognise a UVR domain in the interval A651 to Q686. The segment at E687–H740 is disordered. Over residues T712 to H740 the composition is skewed to basic and acidic residues.

This sequence belongs to the UvrB family. Forms a heterotetramer with UvrA during the search for lesions. Interacts with UvrC in an incision complex.

It localises to the cytoplasm. The UvrABC repair system catalyzes the recognition and processing of DNA lesions. A damage recognition complex composed of 2 UvrA and 2 UvrB subunits scans DNA for abnormalities. Upon binding of the UvrA(2)B(2) complex to a putative damaged site, the DNA wraps around one UvrB monomer. DNA wrap is dependent on ATP binding by UvrB and probably causes local melting of the DNA helix, facilitating insertion of UvrB beta-hairpin between the DNA strands. Then UvrB probes one DNA strand for the presence of a lesion. If a lesion is found the UvrA subunits dissociate and the UvrB-DNA preincision complex is formed. This complex is subsequently bound by UvrC and the second UvrB is released. If no lesion is found, the DNA wraps around the other UvrB subunit that will check the other stand for damage. This Zymomonas mobilis subsp. mobilis (strain ATCC 31821 / ZM4 / CP4) protein is UvrABC system protein B.